We begin with the raw amino-acid sequence, 800 residues long: DNA topoisomerase 4 subunit A (800 aa).

One can recognise a Topo IIA-type catalytic domain in the interval Leu-31 to Val-496. The active-site O-(5'-phospho-DNA)-tyrosine intermediate is the Tyr-119.

It belongs to the type II topoisomerase GyrA/ParC subunit family. ParC type 2 subfamily. In terms of assembly, heterotetramer composed of ParC and ParE.

It is found in the cell membrane. The enzyme catalyses ATP-dependent breakage, passage and rejoining of double-stranded DNA.. Functionally, topoisomerase IV is essential for chromosome segregation. It relaxes supercoiled DNA. Performs the decatenation events required during the replication of a circular DNA molecule. This is DNA topoisomerase 4 subunit A from Staphylococcus epidermidis (strain ATCC 12228 / FDA PCI 1200).